The primary structure comprises 361 residues: D-amino-acid oxidase (361 aa).

An N-terminal signal peptide occupies residues Met-1–Ser-22. Residues Ala-10, Ile-13, Lys-34, His-35, Ala-45, Ser-46, Gly-50, and Asn-52 each coordinate FAD. Asn-193 and Asn-222 each carry an N-linked (GlcNAc...) asparagine glycan. Residues Tyr-242, Tyr-258, and Arg-305 each coordinate (R)-lactate. Residues Tyr-242, Tyr-258, and Arg-305 each contribute to the anthranilate site. Positions 305, 332, 335, 336, and 337 each coordinate FAD. The short motif at Ser-359–Leu-361 is the Microbody targeting signal element.

The protein belongs to the DAMOX/DASOX family. The cofactor is FAD. The N-terminus is blocked.

It is found in the peroxisome matrix. The enzyme catalyses a D-alpha-amino acid + O2 + H2O = a 2-oxocarboxylate + H2O2 + NH4(+). In terms of biological role, catalyzes the oxidative deamination of D-amino acids with broad substrate specificity. Enables the organism to utilize D-amino acids as a source of nutrients. The polypeptide is D-amino-acid oxidase (Fusarium vanettenii (Neocosmospora pisi)).